The following is a 424-amino-acid chain: L-glutamine:scyllo-inosose aminotransferase (424 aa).

A disordered region spans residues 1–21; sequence MDSSLAISGGPRLSNREWPRW. Position 202 is an N6-(pyridoxal phosphate)lysine (Lys-202).

Belongs to the DegT/DnrJ/EryC1 family. L-glutamine:2-deoxy-scyllo-inosose/scyllo-inosose aminotransferase subfamily. Homodimer. Pyridoxal 5'-phosphate is required as a cofactor.

The catalysed reaction is scyllo-inosose + L-glutamine = 1-amino-1-deoxy-scyllo-inositol + 2-oxoglutaramate. It participates in antibiotic biosynthesis; streptomycin biosynthesis. In terms of biological role, catalyzes the PLP-dependent transamination of scyllo-inosose to form scyllo-inosamine. This Streptomyces griseus protein is L-glutamine:scyllo-inosose aminotransferase (stsC).